The following is a 234-amino-acid chain: tRNA1(Val) (adenine(37)-N6)-methyltransferase (234 aa).

It belongs to the methyltransferase superfamily. tRNA (adenine-N(6)-)-methyltransferase family.

Its subcellular location is the cytoplasm. It catalyses the reaction adenosine(37) in tRNA1(Val) + S-adenosyl-L-methionine = N(6)-methyladenosine(37) in tRNA1(Val) + S-adenosyl-L-homocysteine + H(+). Functionally, specifically methylates the adenine in position 37 of tRNA(1)(Val) (anticodon cmo5UAC). The polypeptide is tRNA1(Val) (adenine(37)-N6)-methyltransferase (Flavobacterium psychrophilum (strain ATCC 49511 / DSM 21280 / CIP 103535 / JIP02/86)).